A 407-amino-acid chain; its full sequence is Proteasome-activating nucleotidase (407 aa).

Residues 22–67 are a coiled coil; the sequence is KEKTQIAELESKVLRLELKNKDINRENVQIKKENEILKRELDKLRI. Residues 192–197 and H331 contribute to the ATP site; that span reads GTGKTL. The docks into pockets in the proteasome alpha-ring to cause gate opening stretch occupies residues 405–407; it reads MYG.

It belongs to the AAA ATPase family. As to quaternary structure, homohexamer. The hexameric complex has a two-ring architecture resembling a top hat that caps the 20S proteasome core at one or both ends. Upon ATP-binding, the C-terminus of PAN interacts with the alpha-rings of the proteasome core by binding to the intersubunit pockets.

It localises to the cytoplasm. Its function is as follows. ATPase which is responsible for recognizing, binding, unfolding and translocation of substrate proteins into the archaeal 20S proteasome core particle. Is essential for opening the gate of the 20S proteasome via an interaction with its C-terminus, thereby allowing substrate entry and access to the site of proteolysis. Thus, the C-termini of the proteasomal ATPase function like a 'key in a lock' to induce gate opening and therefore regulate proteolysis. Unfolding activity requires energy from ATP hydrolysis, whereas ATP binding alone promotes ATPase-20S proteasome association which triggers gate opening, and supports translocation of unfolded substrates. The chain is Proteasome-activating nucleotidase from Methanococcus maripaludis (strain DSM 14266 / JCM 13030 / NBRC 101832 / S2 / LL).